The sequence spans 211 residues: MRVTVLDHPLVAHKLSVLREKDTPSPVFRQLVEELVTLLAYEATRDVRVEPVTIQTPVAETQGTALTRPRPLVVPILRAGLGMLEGMTHLIPTAEVGFLGMARDDATLDIITYAERLPDDLTGRQVYVLDPMLATGGTLSEAIKFLYRRGAQDITCVCLLAAPEGLDRLEKELGDSEVNVVLASVDERLDENAYIVPGLGDAGDRLYGVVD.

5-phospho-alpha-D-ribose 1-diphosphate contacts are provided by residues Arg78, Arg103, and 130–138 (DPMLATGGT). Residues Ile195 and 200-202 (GDA) each bind uracil. Asp201 contributes to the 5-phospho-alpha-D-ribose 1-diphosphate binding site.

It belongs to the UPRTase family. Requires Mg(2+) as cofactor.

The catalysed reaction is UMP + diphosphate = 5-phospho-alpha-D-ribose 1-diphosphate + uracil. It participates in pyrimidine metabolism; UMP biosynthesis via salvage pathway; UMP from uracil: step 1/1. Allosterically activated by GTP. In terms of biological role, catalyzes the conversion of uracil and 5-phospho-alpha-D-ribose 1-diphosphate (PRPP) to UMP and diphosphate. The polypeptide is Uracil phosphoribosyltransferase (Kocuria rhizophila (strain ATCC 9341 / DSM 348 / NBRC 103217 / DC2201)).